A 284-amino-acid chain; its full sequence is Sulfotransferase 2A6 (284 aa).

43 to 48 serves as a coordination point for 3'-phosphoadenylyl sulfate; sequence KSGTNW. Catalysis depends on H98, which acts as the Proton acceptor. Residues R120, S128, Y183, 217 to 222, and 246 to 248 each bind 3'-phosphoadenylyl sulfate; these read SSFQVM and RNG.

The protein belongs to the sulfotransferase 1 family. Oligomer. As to expression, liver, exhibiting a sex-dependent spatial localization in the lobule of the liver.

The protein localises to the cytoplasm. It localises to the cytosol. The catalysed reaction is an alcohol + 3'-phosphoadenylyl sulfate = an alkyl sulfate + adenosine 3',5'-bisphosphate + H(+). The enzyme catalyses glycolithocholate + 3'-phosphoadenylyl sulfate = sulfoglycolithocholate + adenosine 3',5'-bisphosphate + H(+). It carries out the reaction taurolithocholate + 3'-phosphoadenylyl sulfate = taurolithocholate 3-sulfate + adenosine 3',5'-bisphosphate + H(+). It catalyses the reaction 3beta-hydroxyandrost-5-en-17-one + 3'-phosphoadenylyl sulfate = dehydroepiandrosterone 3-sulfate + adenosine 3',5'-bisphosphate + H(+). The catalysed reaction is 3beta-hydroxy-5-cholenate + 3'-phosphoadenylyl sulfate = 3beta-sulfo-5-cholenate + adenosine 3',5'-bisphosphate + H(+). The enzyme catalyses deoxycholate + 3'-phosphoadenylyl sulfate = 3alpha-sulfodeoxycholate + adenosine 3',5'-bisphosphate + H(+). It carries out the reaction glycodeoxycholate + 3'-phosphoadenylyl sulfate = 3alpha-sulfoglycodeoxycholate + adenosine 3',5'-bisphosphate + H(+). It catalyses the reaction taurodeoxycholate + 3'-phosphoadenylyl sulfate = 3alpha-sulfotaurodeoxycholate + adenosine 3',5'-bisphosphate + H(+). Functionally, sulfotransferase that utilizes 3'-phospho-5'-adenylyl sulfate (PAPS) as sulfonate donor to catalyze the sulfonation of the hydroxyl group of hydroxysteroids and bile acids. Prefered substrates are dehydroepiandrosterone (DHEA, also known as 3beta-hydroxyandrost-5-en-17-one) and 3beta-hydroxy-5-cholenoate, but can also catalyze deoxycholate and its conjugates, and lithocholate conjugates, in vitro. The polypeptide is Sulfotransferase 2A6 (Rattus norvegicus (Rat)).